The sequence spans 591 residues: V-type ATP synthase alpha chain (591 aa).

233–240 provides a ligand contact to ATP; that stretch reads GPFGAGKT.

This sequence belongs to the ATPase alpha/beta chains family.

It catalyses the reaction ATP + H2O + 4 H(+)(in) = ADP + phosphate + 5 H(+)(out). Produces ATP from ADP in the presence of a proton gradient across the membrane. The V-type alpha chain is a catalytic subunit. In Streptococcus pyogenes serotype M49 (strain NZ131), this protein is V-type ATP synthase alpha chain.